We begin with the raw amino-acid sequence, 732 residues long: MSYGYDDEDAKRKKRYVIISISSVLLISMVVAVTIGVSVNKSDNAGDEEITTSVKAIKDVCAPTDYKETCEDTLRKDAKDTSDPLELVKTAFNATMKQISDVAKKSQTMIELQKDPRAKMALDQCKELMDYAIGELSKSFEELGKFEFHKVDEALVKLRIWLSATISHEQTCLDGFQGTQGNAGETIKKALKTAVQLTHNGLAMVTEMSNYLGQMQIPEMNSRRLLSQEFPSWMDARARRLLNAPMSEVKPDIVVAQDGSGQYKTINEALNFVPKKKNTTFVVHIKEGIYKEYVQVNRSMTHLVFIGDGPDKTVISGSKSYKDGITTYKTATVAIVGDHFIAKNIAFENTAGAIKHQAVAIRVLADESIFYNCKFDGYQDTLYAHSHRQFYRDCTISGTIDFLFGDAAAVFQNCTLLVRKPLLNQACPITAHGRKDPRESTGFVLQGCTIVGEPDYLAVKEQSKTYLGRPWKEYSRTIIMNTFIPDFVPPEGWQPWLGEFGLNTLFYSEVQNTGPGAAITKRVTWPGIKKLSDEEILKFTPAQYIQGDAWIPGKGVPYILGLFSGNGSTNSTVTGSSLSSNTTESSDSPSTVVTPSTSPPAGHLGSPSDTPSSVVSPSTSLPAGQLGAPPATPSMVVSPSTSPPAGHLGSPSDTPSSLVSPSTSPPAGHLGSPSDTPSSVVTPSASPSTSPSASPSVSPSAFPSASPSASPSASPSVSPSASPSASPQSSIG.

A helical transmembrane segment spans residues 17-37; sequence VIISISSVLLISMVVAVTIGV. 4 N-linked (GlcNAc...) asparagine glycosylation sites follow: asparagine 40, asparagine 93, asparagine 278, and asparagine 297. The tract at residues 51–204 is pectinesterase inhibitor 28; the sequence is TTSVKAIKDV…VQLTHNGLAM (154 aa). A pectinesterase 28 region spans residues 252–548; it reads DIVVAQDGSG…FTPAQYIQGD (297 aa). The substrate site is built by threonine 327 and glutamine 357. Aspartate 380 acts as the Proton donor; for pectinesterase activity in catalysis. The cysteines at positions 394 and 414 are disulfide-linked. Residue aspartate 401 is the Nucleophile; for pectinesterase activity of the active site. N-linked (GlcNAc...) asparagine glycosylation is present at asparagine 413. Arginine 469 and tryptophan 471 together coordinate substrate. N-linked (GlcNAc...) asparagine glycans are attached at residues asparagine 566, asparagine 570, and asparagine 581. Composition is skewed to low complexity over residues 570-620 and 633-732; these read NSTV…PSTS and PSMV…SSIG. Residues 570–732 are disordered; it reads NSTVTGSSLS…PSASPQSSIG (163 aa).

The protein in the N-terminal section; belongs to the PMEI family. It in the C-terminal section; belongs to the pectinesterase family. In terms of tissue distribution, expressed in flower buds.

It localises to the membrane. The enzyme catalyses [(1-&gt;4)-alpha-D-galacturonosyl methyl ester](n) + n H2O = [(1-&gt;4)-alpha-D-galacturonosyl](n) + n methanol + n H(+). Its pathway is glycan metabolism; pectin degradation; 2-dehydro-3-deoxy-D-gluconate from pectin: step 1/5. Functionally, acts in the modification of cell walls via demethylesterification of cell wall pectin. In Arabidopsis thaliana (Mouse-ear cress), this protein is Putative pectinesterase/pectinesterase inhibitor 28 (PME28).